The following is a 129-amino-acid chain: Small ribosomal subunit protein eS6 (129 aa).

Residues 106–129 are disordered; the sequence is QINASIVSRGEQSIDDLLGGEDDE.

Belongs to the eukaryotic ribosomal protein eS6 family.

In Natronomonas pharaonis (strain ATCC 35678 / DSM 2160 / CIP 103997 / JCM 8858 / NBRC 14720 / NCIMB 2260 / Gabara) (Halobacterium pharaonis), this protein is Small ribosomal subunit protein eS6.